A 132-amino-acid chain; its full sequence is MPTINQLVRKERKKVTVKSKSPALKECPQRRGVCTRVYTTTPKKPNSALRKVAKVRLTSGFEVISYIGGEGHNLQEHSIVLVRGGRVKDLPGVKYHIVRGALDTAGVAKRTVARSKYGAKRPKAGAAAAAKK.

Aspartate 89 carries the 3-methylthioaspartic acid modification.

The protein belongs to the universal ribosomal protein uS12 family. Part of the 30S ribosomal subunit. Contacts proteins S8 and S17. May interact with IF1 in the 30S initiation complex.

In terms of biological role, with S4 and S5 plays an important role in translational accuracy. Interacts with and stabilizes bases of the 16S rRNA that are involved in tRNA selection in the A site and with the mRNA backbone. Located at the interface of the 30S and 50S subunits, it traverses the body of the 30S subunit contacting proteins on the other side and probably holding the rRNA structure together. The combined cluster of proteins S8, S12 and S17 appears to hold together the shoulder and platform of the 30S subunit. The polypeptide is Small ribosomal subunit protein uS12 (Campylobacter curvus (strain 525.92)).